A 113-amino-acid chain; its full sequence is Class I hydrophobin POH1 (113 aa).

The first 26 residues, 1–26, serve as a signal peptide directing secretion; the sequence is MFSIRISTVVLAASALLAVAIPMTNT. Cystine bridges form between Cys-31/Cys-93, Cys-38/Cys-87, Cys-39/Cys-74, and Cys-94/Cys-107.

The protein belongs to the fungal hydrophobin family. Self-assembles to form functional amyloid fibrils called rodlets. Self-assembly into fibrillar rodlets occurs spontaneously at hydrophobic:hydrophilic interfaces and the rodlets further associate laterally to form amphipathic monolayers. As to expression, expressed in the fruiting bodies but not in vegetative mycelium.

It localises to the secreted. It is found in the cell wall. Functionally, aerial growth, conidiation, and dispersal of filamentous fungi in the environment rely upon a capability of their secreting small amphipathic proteins called hydrophobins (HPBs) with low sequence identity. Class I can self-assemble into an outermost layer of rodlet bundles on aerial cell surfaces, conferring cellular hydrophobicity that supports fungal growth, development and dispersal; whereas Class II form highly ordered films at water-air interfaces through intermolecular interactions but contribute nothing to the rodlet structure. POH1 is a class I hydrophobin that is involved in the formation of mycelium knots and subsequent fruiting bodies. This is Class I hydrophobin POH1 from Pleurotus ostreatus (Oyster mushroom).